Here is a 382-residue protein sequence, read N- to C-terminus: Aminotransferase FGSG_00049 (382 aa).

Arg-80 lines the pyridoxal 5'-phosphate pocket. Position 181 is an N6-(pyridoxal phosphate)lysine (Lys-181). Pyridoxal 5'-phosphate is bound at residue Glu-217.

This sequence belongs to the class-IV pyridoxal-phosphate-dependent aminotransferase family. Pyridoxal 5'-phosphate serves as cofactor.

It functions in the pathway mycotoxin biosynthesis. Functionally, aminotransferase; part of the gene cluster that mediates the biosynthesis of gramillins A and B, bicyclic lipopeptides that induce cell death in maize leaves but not in wheat leaves. The nonribosomal peptide synthetase GRA1 incorporates respectively a glutamic adic (Glu), a leucine (Leu), a serine (Ser), a hydroxyglutamine (HOGln), a 2-amino decanoic acid, and 2 cysteins (CysB and CysA). The biosynthesis of 2-amino decanoic acid incorporated in gramillins could be initiated by a fatty acid synthase composed of the alpha and beta subunits FGSG_00036 and FGSG_11656. The cytochrome P450 monooxygenase FGSG_15680 could hydroxylate the fatty acid chain. Subsequent oxidation to the ketone by the oxidoreductase FGSG_00048 and transamination by aminotransferase FGSG_00049 could form 2-amino-decanoic acid. On the other hand, FGSG_15680 could also be responsible for the HO-modified glutamine at the gamma-position. Whether hydroxylation occurs on the fully assembled product or on the Gln residue prior to assembly into the gramillins requires further proof. The thioredoxin FGSG_00043 could also be required for the disulfide-bond formation between CysA and CysB. The specific involvement of the remaining proteins from the cluster is more difficult to discern, but could have broader regulatory (FGSG_00040 and FGSG_11657) or enzymatic functions (FGSG_00044 and FGSG_00045). The final C-domain of GRA1 does not possess the expected sequence of a termination CT domain, often implicated in macrocyclization and release of a cyclopeptidein fungal NRPs; and the thioesterase FGSG_00047 may act in concert with the terminal C-domain of GRA1 to catalyze the formation of the macrocyclic anhydride and release of the products. This is Aminotransferase FGSG_00049 from Gibberella zeae (strain ATCC MYA-4620 / CBS 123657 / FGSC 9075 / NRRL 31084 / PH-1) (Wheat head blight fungus).